Reading from the N-terminus, the 62-residue chain is Photosystem II reaction center protein Z (62 aa).

The next 2 helical transmembrane spans lie at 8–28 (AVFA…VVFA) and 41–61 (FSGT…NSLI).

The protein belongs to the PsbZ family. PSII is composed of 1 copy each of membrane proteins PsbA, PsbB, PsbC, PsbD, PsbE, PsbF, PsbH, PsbI, PsbJ, PsbK, PsbL, PsbM, PsbT, PsbY, PsbZ, Psb30/Ycf12, at least 3 peripheral proteins of the oxygen-evolving complex and a large number of cofactors. It forms dimeric complexes.

It localises to the plastid. Its subcellular location is the chloroplast thylakoid membrane. May control the interaction of photosystem II (PSII) cores with the light-harvesting antenna, regulates electron flow through the 2 photosystem reaction centers. PSII is a light-driven water plastoquinone oxidoreductase, using light energy to abstract electrons from H(2)O, generating a proton gradient subsequently used for ATP formation. The protein is Photosystem II reaction center protein Z of Coffea arabica (Arabian coffee).